The sequence spans 320 residues: Polynucleotide 5'-triphosphatase CTL1 (320 aa).

Residues 1 to 12 (MSDQPETPSNSR) show a composition bias toward polar residues. A disordered region spans residues 1 to 23 (MSDQPETPSNSRNSHENVGAKKA). Residues 13–23 (NSHENVGAKKA) are compositionally biased toward basic and acidic residues.

This sequence belongs to the fungal TPase family. The cofactor is Mg(2+). Mn(2+) serves as cofactor.

The protein localises to the cytoplasm. Its subcellular location is the nucleus. It catalyses the reaction a 5'-end triphospho-ribonucleoside in mRNA + H2O = a 5'-end diphospho-ribonucleoside in mRNA + phosphate + H(+). Its function is as follows. Probably involved in an RNA processing event other than mRNA capping. Releases gamma-phosphate from the 5'-end of RNA to produce a diphosphate terminus. The polypeptide is Polynucleotide 5'-triphosphatase CTL1 (Saccharomyces cerevisiae (strain ATCC 204508 / S288c) (Baker's yeast)).